The chain runs to 267 residues: Phosphate import ATP-binding protein PstB (267 aa).

The ABC transporter domain occupies 21–262 (VAARNLDFYY…PSKQQTEDYI (242 aa)). 53–60 (GPSGCGKS) lines the ATP pocket.

Belongs to the ABC transporter superfamily. Phosphate importer (TC 3.A.1.7) family. The complex is composed of two ATP-binding proteins (PstB), two transmembrane proteins (PstC and PstA) and a solute-binding protein (PstS).

It localises to the cell inner membrane. It catalyses the reaction phosphate(out) + ATP + H2O = ADP + 2 phosphate(in) + H(+). Part of the ABC transporter complex PstSACB involved in phosphate import. Responsible for energy coupling to the transport system. The polypeptide is Phosphate import ATP-binding protein PstB (Xanthomonas campestris pv. campestris (strain 8004)).